The primary structure comprises 209 residues: Uracil phosphoribosyltransferase (209 aa).

Residues R79, R104, and 131 to 139 (DPMLATGGS) contribute to the 5-phospho-alpha-D-ribose 1-diphosphate site. Uracil is bound by residues I194 and 199-201 (GDA). D200 serves as a coordination point for 5-phospho-alpha-D-ribose 1-diphosphate.

This sequence belongs to the UPRTase family. Mg(2+) serves as cofactor.

The catalysed reaction is UMP + diphosphate = 5-phospho-alpha-D-ribose 1-diphosphate + uracil. It functions in the pathway pyrimidine metabolism; UMP biosynthesis via salvage pathway; UMP from uracil: step 1/1. Allosterically activated by GTP. Its function is as follows. Catalyzes the conversion of uracil and 5-phospho-alpha-D-ribose 1-diphosphate (PRPP) to UMP and diphosphate. The protein is Uracil phosphoribosyltransferase of Clostridium perfringens (strain SM101 / Type A).